The following is a 229-amino-acid chain: 7-cyano-7-deazaguanine synthase (229 aa).

Residue 7–17 coordinates ATP; that stretch reads LSGGLDSSTIL. Residues C191, C199, C202, and C205 each coordinate Zn(2+).

This sequence belongs to the QueC family. The cofactor is Zn(2+).

The enzyme catalyses 7-carboxy-7-deazaguanine + NH4(+) + ATP = 7-cyano-7-deazaguanine + ADP + phosphate + H2O + H(+). It participates in purine metabolism; 7-cyano-7-deazaguanine biosynthesis. Functionally, catalyzes the ATP-dependent conversion of 7-carboxy-7-deazaguanine (CDG) to 7-cyano-7-deazaguanine (preQ(0)). This Nostoc sp. (strain PCC 7120 / SAG 25.82 / UTEX 2576) protein is 7-cyano-7-deazaguanine synthase.